The following is a 359-amino-acid chain: Sulfate/thiosulfate import ATP-binding protein CysA (359 aa).

The ABC transporter domain occupies 3 to 237 (VRVAGVRKEF…PNSPFVYGFI (235 aa)). 35-42 (GPSGSGKT) contributes to the ATP binding site.

Belongs to the ABC transporter superfamily. Sulfate/tungstate importer (TC 3.A.1.6) family. The complex is composed of two ATP-binding proteins (CysA), two transmembrane proteins (CysT and CysW) and a solute-binding protein (CysP).

It is found in the cell inner membrane. It catalyses the reaction sulfate(out) + ATP + H2O = sulfate(in) + ADP + phosphate + H(+). The catalysed reaction is thiosulfate(out) + ATP + H2O = thiosulfate(in) + ADP + phosphate + H(+). Its function is as follows. Part of the ABC transporter complex CysAWTP involved in sulfate/thiosulfate import. Responsible for energy coupling to the transport system. The chain is Sulfate/thiosulfate import ATP-binding protein CysA from Brucella melitensis biotype 1 (strain ATCC 23456 / CCUG 17765 / NCTC 10094 / 16M).